The following is a 424-amino-acid chain: Spermatogenesis-associated protein 2-like protein (424 aa).

Disordered regions lie at residues 233 to 258 and 273 to 300; these read EDEG…AELA and TGGR…EEGL. Position 327 is a phosphoserine (serine 327).

Belongs to the SPATA2 family.

The chain is Spermatogenesis-associated protein 2-like protein from Homo sapiens (Human).